The primary structure comprises 282 residues: Acetyl-coenzyme A carboxylase carboxyl transferase subunit beta (282 aa).

The CoA carboxyltransferase N-terminal domain maps to 25–282 (LWTKCVSCGE…SSILTMLYRP (258 aa)). C29, C32, C48, and C51 together coordinate Zn(2+). The C4-type zinc finger occupies 29-51 (CVSCGETIYTKDIENNLNVCPKC).

It belongs to the AccD/PCCB family. Acetyl-CoA carboxylase is a heterohexamer composed of biotin carboxyl carrier protein (AccB), biotin carboxylase (AccC) and two subunits each of ACCase subunit alpha (AccA) and ACCase subunit beta (AccD). Zn(2+) is required as a cofactor.

Its subcellular location is the cytoplasm. The catalysed reaction is N(6)-carboxybiotinyl-L-lysyl-[protein] + acetyl-CoA = N(6)-biotinyl-L-lysyl-[protein] + malonyl-CoA. Its pathway is lipid metabolism; malonyl-CoA biosynthesis; malonyl-CoA from acetyl-CoA: step 1/1. In terms of biological role, component of the acetyl coenzyme A carboxylase (ACC) complex. Biotin carboxylase (BC) catalyzes the carboxylation of biotin on its carrier protein (BCCP) and then the CO(2) group is transferred by the transcarboxylase to acetyl-CoA to form malonyl-CoA. This Citrifermentans bemidjiense (strain ATCC BAA-1014 / DSM 16622 / JCM 12645 / Bem) (Geobacter bemidjiensis) protein is Acetyl-coenzyme A carboxylase carboxyl transferase subunit beta.